The chain runs to 613 residues: Phosphoinositide phospholipase C 6 (613 aa).

Positions 137–281 constitute a PI-PLC X-box domain; it reads QDMTAPLSHY…LLHRIIISTK (145 aa). Active-site residues include histidine 152 and histidine 198. Positions 288–349 are disordered; that stretch reads ESRNPIVKQK…ASEDQKPAYK (62 aa). Positions 349–465 constitute a PI-PLC Y-box domain; the sequence is KRLITIHAGK…GYVKKPNFLM (117 aa). Residues 466-595 form the C2 domain; that stretch reads KKGFHDEVFD…PGIRSVPLYD (130 aa).

Requires Ca(2+) as cofactor. Expressed in leaves, flowers and siliques, but not in roots.

The protein resides in the cell membrane. It carries out the reaction a 1,2-diacyl-sn-glycero-3-phospho-(1D-myo-inositol-4,5-bisphosphate) + H2O = 1D-myo-inositol 1,4,5-trisphosphate + a 1,2-diacyl-sn-glycerol + H(+). Its function is as follows. The production of the second messenger molecules diacylglycerol (DAG) and inositol 1,4,5-trisphosphate (IP3) is mediated by activated phosphatidylinositol-specific phospholipase C enzymes. The chain is Phosphoinositide phospholipase C 6 (PLC6) from Arabidopsis thaliana (Mouse-ear cress).